A 134-amino-acid polypeptide reads, in one-letter code: Cell division protein SepF 1 (134 aa).

This sequence belongs to the SepF family. In terms of assembly, homodimer. Interacts with FtsZ.

Its subcellular location is the cytoplasm. Cell division protein that is part of the divisome complex and is recruited early to the Z-ring. Probably stimulates Z-ring formation, perhaps through the cross-linking of FtsZ protofilaments. Its function overlaps with FtsA. The chain is Cell division protein SepF 1 from Streptomyces avermitilis (strain ATCC 31267 / DSM 46492 / JCM 5070 / NBRC 14893 / NCIMB 12804 / NRRL 8165 / MA-4680).